We begin with the raw amino-acid sequence, 878 residues long: Alanine--tRNA ligase (878 aa).

Positions 558, 562, 663, and 667 each coordinate Zn(2+).

Belongs to the class-II aminoacyl-tRNA synthetase family. Zn(2+) is required as a cofactor.

The protein localises to the cytoplasm. The enzyme catalyses tRNA(Ala) + L-alanine + ATP = L-alanyl-tRNA(Ala) + AMP + diphosphate. Its function is as follows. Catalyzes the attachment of alanine to tRNA(Ala) in a two-step reaction: alanine is first activated by ATP to form Ala-AMP and then transferred to the acceptor end of tRNA(Ala). Also edits incorrectly charged Ser-tRNA(Ala) and Gly-tRNA(Ala) via its editing domain. In Mycoplasmopsis synoviae (strain 53) (Mycoplasma synoviae), this protein is Alanine--tRNA ligase.